Here is a 365-residue protein sequence, read N- to C-terminus: Outer capsid protein sigma-3 (365 aa).

A CCHC-type zinc finger spans residues 51–73 (CMHCLGVVGSLQRKLKHLPHHRC).

This sequence belongs to the orthoreovirus sigma-3 protein family. In terms of assembly, heterohexamer of three sigma-3 and three Mu-1 proteins. The RNA-binding form is probably a homodimer. Cleaved during virus the endosomal proteolytic disassembly of the outer capsid.

It localises to the virion. The protein resides in the host cytoplasm. The protein localises to the host nucleus. Stimulates translation by blocking the activation of the dsRNA-dependent protein kinase EIF2AK2/PKR, thereby inhibiting the host interferon response. Sigma3 prevents the activation of EIF2AK2 by competing with the kinase for dsRNA-binding. Its function is as follows. The viral outer shell polypeptides, of which sigma-3 is one, impose structural constraints that prevent elongation of nascent transcripts by the RNA-dependent RNA polymerase lambda-3. The chain is Outer capsid protein sigma-3 (S4) from Reovirus type 3 (strain Dearing) (T3D).